Reading from the N-terminus, the 661-residue chain is Acyl-coenzyme A oxidase acox-1.2 (661 aa).

Residues 147-150 (YAQT), 155-156 (GS), and Gly189 each bind FAD. Residues 283–286 (KIGY) and Arg293 contribute to the substrate site. Residues Arg318 and 338–341 (QQHR) contribute to the FAD site. ATP is bound by residues His340, Ser390, His394, and Gln402. Gly409 provides a ligand contact to FAD. 431–432 (YE) contributes to the substrate binding site. Glu432 acts as the Proton acceptor in catalysis. Glu434 lines the FAD pocket. Residues 525–528 (RASR) and Tyr573 each bind ATP. The Microbody targeting signal motif lies at 659 to 661 (AKL).

This sequence belongs to the acyl-CoA oxidase family. Homodimer. Forms a heterodimer with acox-1.1. FAD is required as a cofactor.

The protein resides in the peroxisome. The enzyme catalyses asc-omegaC5-CoA + O2 = asc-omegaDeltaC5-CoA + H2O2. It participates in lipid metabolism; peroxisomal fatty acid beta-oxidation. Its activity is regulated as follows. Activated by ATP. ATP binding leads to a conformational change that promotes FAD cofactor binding and enzyme activity. ATP binding likely occurs during acox-1.2 folding and/or dimer formation. The preference for processing substrates with shorter fatty acid chains is likely due to the closed conformation of the active site. Its function is as follows. Involved in the first step of peroxisomal beta-oxidation by catalyzing the desaturation of fatty acid-derived side chains of ascaroside pheromones, which regulates development and behavior. Specifically, shortens ascarosides with 5-carbon omega side chain (asc-omega-C5). Does not shorten indol-3-carbonyl(IC)-ascaroside with 7-carbon or 9-carbon side chains. Does not catalyze the desaturation of fatty acids or hydroxylated fatty acids. The polypeptide is Acyl-coenzyme A oxidase acox-1.2 (Caenorhabditis elegans).